A 144-amino-acid polypeptide reads, in one-letter code: Large ribosomal subunit protein uL15 (144 aa).

The disordered stretch occupies residues 1 to 50; that stretch reads MRLNTLSPAAGAKSAKKRVGRGIGSGLGKTGGRGVKGAGSRSGGGVRAGF. Residues 21-50 are compositionally biased toward gly residues; sequence RGIGSGLGKTGGRGVKGAGSRSGGGVRAGF.

The protein belongs to the universal ribosomal protein uL15 family. As to quaternary structure, part of the 50S ribosomal subunit.

Binds to the 23S rRNA. The protein is Large ribosomal subunit protein uL15 of Tolumonas auensis (strain DSM 9187 / NBRC 110442 / TA 4).